The primary structure comprises 88 residues: Cell division topological specificity factor (88 aa).

Belongs to the MinE family.

Its function is as follows. Prevents the cell division inhibition by proteins MinC and MinD at internal division sites while permitting inhibition at polar sites. This ensures cell division at the proper site by restricting the formation of a division septum at the midpoint of the long axis of the cell. This Aromatoleum aromaticum (strain DSM 19018 / LMG 30748 / EbN1) (Azoarcus sp. (strain EbN1)) protein is Cell division topological specificity factor.